A 409-amino-acid polypeptide reads, in one-letter code: Peptidase T (409 aa).

His-78 contributes to the Zn(2+) binding site. Residue Asp-80 is part of the active site. Asp-140 serves as a coordination point for Zn(2+). Catalysis depends on Glu-173, which acts as the Proton acceptor. Glu-174, Asp-196, and His-379 together coordinate Zn(2+).

Belongs to the peptidase M20B family. Requires Zn(2+) as cofactor.

It localises to the cytoplasm. The enzyme catalyses Release of the N-terminal residue from a tripeptide.. Cleaves the N-terminal amino acid of tripeptides. This is Peptidase T from Salmonella choleraesuis (strain SC-B67).